A 461-amino-acid chain; its full sequence is Diacylglycerol O-acyltransferase 1 (461 aa).

Positions 1–38 (MQDSMDDSLREAEGRQDDSEVSSGTTLGSSTPEDSGVT) are disordered. Topologically, residues 1-112 (MQDSMDDSLR…TLVVAWHTSS (112 aa)) are cytoplasmic. Residues 7 to 18 (DSLREAEGRQDD) are compositionally biased toward basic and acidic residues. The segment covering 21–33 (VSSGTTLGSSTPE) has biased composition (polar residues). Residues 113 to 133 (FIYMTVLVLFLAANPLMWWFM) form a helical membrane-spanning segment. The Lumenal segment spans residues 134-230 (VPYMVYYVWN…ARPQVATGPR (97 aa)). A helical transmembrane segment spans residues 231–251 (YIFGYHPHGVGALGAFGAIAT). Over 252-258 (EGCNWSK) the chain is Cytoplasmic. The chain crosses the membrane as a helical span at residues 259–279 (VFAGIPACLCTLVNQFQIPIY). The Lumenal portion of the chain corresponds to 280 to 332 (RDYLLGLGCTSVARKNVLKVLEQNYSVCIVVGGAQEALLSRVGSTELVLNKRK). A helical membrane pass occupies residues 333-353 (GFIKLALETGNVNLVPIYAFG). Residues 354–461 (ETDCFNVLDT…YAGKELKIVE (108 aa)) lie on the Cytoplasmic side of the membrane.

This sequence belongs to the diacylglycerol acyltransferase family.

The protein resides in the lipid droplet. The protein localises to the endoplasmic reticulum membrane. The catalysed reaction is an acyl-CoA + a 1,2-diacyl-sn-glycerol = a triacyl-sn-glycerol + CoA. It carries out the reaction a 2-acylglycerol + an acyl-CoA = a 1,2-diacyl-sn-glycerol + CoA. The protein operates within glycerolipid metabolism; triacylglycerol biosynthesis. Catalyzes the terminal and only committed step in triacylglycerol (TAG) synthesis by using diacylglycerol (DAG) and fatty acyl-CoA as substrates. Required for storage lipid synthesis. Major DAG esterifying enzyme in stationary phase when TAG production is particularly active. Involved in lipid particle synthesis from the endoplasmic reticulum, promoting localized TAG production at discrete ER subdomains. This is Diacylglycerol O-acyltransferase 1 (DGA1) from Eremothecium gossypii (strain ATCC 10895 / CBS 109.51 / FGSC 9923 / NRRL Y-1056) (Yeast).